Consider the following 339-residue polypeptide: tRNA N6-adenosine threonylcarbamoyltransferase (339 aa).

Fe cation is bound by residues H114 and H118. Residues 137–141 (VVSGG), D170, G183, D187, and N277 each bind substrate. D305 provides a ligand contact to Fe cation.

It belongs to the KAE1 / TsaD family. Requires Fe(2+) as cofactor.

Its subcellular location is the cytoplasm. It catalyses the reaction L-threonylcarbamoyladenylate + adenosine(37) in tRNA = N(6)-L-threonylcarbamoyladenosine(37) in tRNA + AMP + H(+). Its function is as follows. Required for the formation of a threonylcarbamoyl group on adenosine at position 37 (t(6)A37) in tRNAs that read codons beginning with adenine. Is involved in the transfer of the threonylcarbamoyl moiety of threonylcarbamoyl-AMP (TC-AMP) to the N6 group of A37, together with TsaE and TsaB. TsaD likely plays a direct catalytic role in this reaction. The chain is tRNA N6-adenosine threonylcarbamoyltransferase from Clostridium beijerinckii (strain ATCC 51743 / NCIMB 8052) (Clostridium acetobutylicum).